We begin with the raw amino-acid sequence, 178 residues long: Large ribosomal subunit protein bL25 (178 aa).

This sequence belongs to the bacterial ribosomal protein bL25 family. CTC subfamily. In terms of assembly, part of the 50S ribosomal subunit; part of the 5S rRNA/L5/L18/L25 subcomplex. Contacts the 5S rRNA. Binds to the 5S rRNA independently of L5 and L18.

Functionally, this is one of the proteins that binds to the 5S RNA in the ribosome where it forms part of the central protuberance. The protein is Large ribosomal subunit protein bL25 of Sulfurimonas denitrificans (strain ATCC 33889 / DSM 1251) (Thiomicrospira denitrificans (strain ATCC 33889 / DSM 1251)).